A 230-amino-acid polypeptide reads, in one-letter code: MSKYAAIPSPYSHQPQAPDHKSKTLVVGLTGGIGSGKSAASNWFAQQGIDIIDADVIAHEVVVKGSATLRKIQRKFGDWVLNINGDMDRAAVRTHVFTYPDALIELEAITHPAIREAAKLQLAESTSPYVVLSAPLLIEAAEAGLANLCQRILVMDATEDTQLARASQRDALSVQKIKAIMVNQLSREERNLHADDVVLNENDLAALYAQLEPLHQDYLKLAQQLKFAAD.

A disordered region spans residues 1-20 (MSKYAAIPSPYSHQPQAPDH). The DPCK domain maps to 26-225 (VVGLTGGIGS…QDYLKLAQQL (200 aa)). 34–39 (GSGKSA) provides a ligand contact to ATP.

This sequence belongs to the CoaE family.

The protein resides in the cytoplasm. The enzyme catalyses 3'-dephospho-CoA + ATP = ADP + CoA + H(+). It participates in cofactor biosynthesis; coenzyme A biosynthesis; CoA from (R)-pantothenate: step 5/5. Catalyzes the phosphorylation of the 3'-hydroxyl group of dephosphocoenzyme A to form coenzyme A. This Psychrobacter arcticus (strain DSM 17307 / VKM B-2377 / 273-4) protein is Dephospho-CoA kinase.